We begin with the raw amino-acid sequence, 207 residues long: Tetrathionate reductase subunit B (207 aa).

Residues 1–28 (MLISKTLIFYQVVNIVSQKGSGKRRWKM) form the signal peptide. 3 4Fe-4S ferredoxin-type domains span residues 34–63 (YVYVVDVSKCYGCLSCVAACAAENNVPVGY), 75–106 (GRVAFVPKICNHCDNPSCVHACPVNATYKTEE), and 107–136 (GLVLIDDEICIGCGACIQACPYGARFRNPV). [4Fe-4S] cluster contacts are provided by Cys-43, Cys-46, Cys-49, Cys-53, Cys-84, Cys-87, Cys-92, Cys-96, Cys-116, Cys-119, Cys-122, Cys-126, Cys-143, Cys-146, Cys-157, and Cys-161.

In terms of assembly, probably composed of three subunits: TtrA, TtrB and TtrC.

The protein resides in the cell membrane. Part of a membrane-bound tetrathionate reductase that catalyzes the reduction of tetrathionate to thiosulfate. TtrB is probably involved in transfer of electrons from TtrC to TtrA. This chain is Tetrathionate reductase subunit B (ttrB), found in Archaeoglobus fulgidus (strain ATCC 49558 / DSM 4304 / JCM 9628 / NBRC 100126 / VC-16).